A 348-amino-acid polypeptide reads, in one-letter code: Myricetin O-methyltransferase (348 aa).

Methionine 1 is subject to N-acetylmethionine. Glycine 189, aspartate 212, aspartate 232, methionine 233, and lysine 246 together coordinate S-adenosyl-L-methionine. The Proton acceptor role is filled by histidine 250.

The N-terminus is blocked.

The catalysed reaction is S-adenosyl-L-methionine + a 3'-hydroxyflavonoid = S-adenosyl-L-homocysteine + a 3'-methoxyflavonoid.. The enzyme catalyses S-adenosyl-L-methionine + a 5'-hydroxy-3'-methoxyflavonoid = S-adenosyl-L-homocysteine + a 3',5'-dimethoxyflavonoid.. Methylates myricetin and dihydromyricetin at 2 sites. Inactive towards 16-hydroxytabersonine, the phenylpropanoids 5-hydroxyferulate, caffeate and their CoA-esters, flavones and flavanones possessing 2 or 3 B-ring hydroxyl groups. The protein is Myricetin O-methyltransferase of Catharanthus roseus (Madagascar periwinkle).